We begin with the raw amino-acid sequence, 593 residues long: Methionine--tRNA ligase, mitochondrial (593 aa).

Residues 1 to 29 (MLRTSVLRLLGRTGASRLSLLEDFGPRYY) constitute a mitochondrion transit peptide. Residues 52 to 62 (FYVNAAPHIGH) carry the 'HIGH' region motif. A 'KMSKS' region motif is present at residues 347–351 (KMSKS). K350 lines the ATP pocket.

It belongs to the class-I aminoacyl-tRNA synthetase family.

It is found in the mitochondrion matrix. It catalyses the reaction tRNA(Met) + L-methionine + ATP = L-methionyl-tRNA(Met) + AMP + diphosphate. The polypeptide is Methionine--tRNA ligase, mitochondrial (MARS2) (Homo sapiens (Human)).